The sequence spans 397 residues: Argininosuccinate synthase (397 aa).

ATP is bound at residue 9–17 (AYSGGLDTS). Tyrosine 86 serves as a coordination point for L-citrulline. Glycine 116 is an ATP binding site. Positions 118, 122, and 123 each coordinate L-aspartate. L-citrulline is bound at residue asparagine 122. L-citrulline contacts are provided by arginine 126, serine 174, glutamate 259, and tyrosine 271.

Belongs to the argininosuccinate synthase family. Type 1 subfamily. As to quaternary structure, homotetramer.

Its subcellular location is the cytoplasm. The enzyme catalyses L-citrulline + L-aspartate + ATP = 2-(N(omega)-L-arginino)succinate + AMP + diphosphate + H(+). The protein operates within amino-acid biosynthesis; L-arginine biosynthesis; L-arginine from L-ornithine and carbamoyl phosphate: step 2/3. The protein is Argininosuccinate synthase of Lactococcus lactis subsp. cremoris (strain MG1363).